A 566-amino-acid polypeptide reads, in one-letter code: Beta,beta-carotene 15,15'-dioxygenase (566 aa).

Positions 172, 237, 308, and 514 each coordinate Fe cation. Positions 530–566 (PAETQEVENSDHPTDPTAPELSHSENDFTAGHGGSSL) are disordered.

It belongs to the carotenoid oxygenase family. Fe(2+) serves as cofactor. As to expression, expressed in liver, kidney, small intestine and testis.

It is found in the cytoplasm. The protein localises to the cytosol. The enzyme catalyses all-trans-beta-carotene + O2 = 2 all-trans-retinal. Its pathway is cofactor metabolism; retinol metabolism. Symmetrically cleaves beta-carotene into two molecules of retinal using a dioxygenase mechanism. The protein is Beta,beta-carotene 15,15'-dioxygenase of Mus musculus (Mouse).